A 213-amino-acid polypeptide reads, in one-letter code: Thiopurine S-methyltransferase (213 aa).

S-adenosyl-L-methionine is bound by residues Trp-10, Leu-46, Glu-67, and Arg-124.

Belongs to the class I-like SAM-binding methyltransferase superfamily. TPMT family.

The protein resides in the cytoplasm. It catalyses the reaction S-adenosyl-L-methionine + a thiopurine = S-adenosyl-L-homocysteine + a thiopurine S-methylether.. This chain is Thiopurine S-methyltransferase, found in Xanthobacter autotrophicus (strain ATCC BAA-1158 / Py2).